We begin with the raw amino-acid sequence, 322 residues long: Ribose-phosphate pyrophosphokinase 1 (322 aa).

ATP is bound by residues 39–41 (DGE) and 98–99 (RQ). Mg(2+) contacts are provided by histidine 132 and aspartate 173. Residue lysine 196 is part of the active site. D-ribose 5-phosphate-binding positions include arginine 198, aspartate 224, and 228–232 (DTAGT).

The protein belongs to the ribose-phosphate pyrophosphokinase family. Class I subfamily. Homohexamer. Requires Mg(2+) as cofactor.

Its subcellular location is the cytoplasm. It catalyses the reaction D-ribose 5-phosphate + ATP = 5-phospho-alpha-D-ribose 1-diphosphate + AMP + H(+). It participates in metabolic intermediate biosynthesis; 5-phospho-alpha-D-ribose 1-diphosphate biosynthesis; 5-phospho-alpha-D-ribose 1-diphosphate from D-ribose 5-phosphate (route I): step 1/1. In terms of biological role, involved in the biosynthesis of the central metabolite phospho-alpha-D-ribosyl-1-pyrophosphate (PRPP) via the transfer of pyrophosphoryl group from ATP to 1-hydroxyl of ribose-5-phosphate (Rib-5-P). This Streptococcus agalactiae serotype III (strain NEM316) protein is Ribose-phosphate pyrophosphokinase 1.